The chain runs to 301 residues: NAD kinase (301 aa).

The active-site Proton acceptor is the Asp84. Residues 84–85 (DG), Arg89, 158–159 (NE), Lys169, Asn188, 199–204 (TAYSFS), and Gln258 each bind NAD(+).

The protein belongs to the NAD kinase family. A divalent metal cation is required as a cofactor.

The protein resides in the cytoplasm. It catalyses the reaction NAD(+) + ATP = ADP + NADP(+) + H(+). Functionally, involved in the regulation of the intracellular balance of NAD and NADP, and is a key enzyme in the biosynthesis of NADP. Catalyzes specifically the phosphorylation on 2'-hydroxyl of the adenosine moiety of NAD to yield NADP. The sequence is that of NAD kinase from Tropheryma whipplei (strain Twist) (Whipple's bacillus).